A 364-amino-acid chain; its full sequence is Pre-mRNA-splicing factor SLT11 (364 aa).

Residues 331–364 (KSTDNAKNDKKKTSKKVHKDRSKKSKPRANKLTI) form a disordered region. The segment covering 339–364 (DKKKTSKKVHKDRSKKSKPRANKLTI) has biased composition (basic residues).

Belongs to the SLT11 family. As to quaternary structure, belongs to the CWC complex (or CEF1-associated complex), a spliceosome subcomplex composed of the U2, U5 and U6 snRNAs and at least BUD13, BUD31, BRR2, CDC40, CEF1, CLF1, CUS1, CWC2, CWC15, CWC21, CWC22, CWC23, CWC24, CWC25, CWC27, ECM2, HSH155, IST3, ISY1, LEA1, MSL1, NTC20, PRP8, PRP9, PRP11, PRP19, PRP21, PRP22, PRP45, PRP46, SLU7, SMB1, SMD1, SMD2, SMD3, SMX2, SMX3, SNT309, SNU114, SPP2, SYF1, SYF2, RSE1 and YJU2. Interacts with SLU7.

It is found in the nucleus. Functionally, involved in pre-mRNA splicing. Facilitates the cooperative formation of U2/U6 helix II in association with stem II in the spliceosome. Binds to RNA. This chain is Pre-mRNA-splicing factor SLT11 (ECM2), found in Saccharomyces cerevisiae (strain ATCC 204508 / S288c) (Baker's yeast).